We begin with the raw amino-acid sequence, 278 residues long: Deoxyribonuclease-1-like 2 (278 aa).

An N-terminal signal peptide occupies residues 1–21; sequence MGWPWAPLTAVWALGVMGATA. Active-site residues include E99 and H150. A disulfide bond links C189 and C225.

Belongs to the DNase I family. Mg(2+) is required as a cofactor. The cofactor is Ca(2+).

The protein resides in the cytoplasm. The protein localises to the secreted. Functionally, divalent cation-dependent acid DNA endonuclease involved in the breakdown of the nucleus during corneocyte formation of epidermal keratinocytes. May play an immune role by eliminating harmful DNA released into the extracellular environment by damaged epidermal cells. The polypeptide is Deoxyribonuclease-1-like 2 (Dnase1l2) (Mus musculus (Mouse)).